Consider the following 739-residue polypeptide: Trehalose phosphorylase (739 aa).

A propeptide spanning residues M1–S26 is cleaved from the precursor. Positions M1 to Q28 are disordered.

This sequence belongs to the glycosyltransferase group 1 family. Glycosyltransferase 4 subfamily. Homodimer.

The enzyme catalyses alpha,alpha-trehalose + phosphate = alpha-D-glucose + alpha-D-glucose 1-phosphate. Its function is as follows. Reversibly catalyzes the synthesis and degradation of trehalose from glucose and alpha-D-glucose 1-phosphate. The equilibrium lies in the direction of trehalose synthesis. The sequence is that of Trehalose phosphorylase from Pleurotus pulmonarius (Indian oyster mushroom).